The primary structure comprises 496 residues: Maturase K (496 aa).

Belongs to the intron maturase 2 family. MatK subfamily.

It localises to the plastid. The protein localises to the chloroplast. Usually encoded in the trnK tRNA gene intron. Probably assists in splicing its own and other chloroplast group II introns. This is Maturase K from Paeonia peregrina (Common peony).